The sequence spans 782 residues: LINE-1 type transposase domain-containing protein 1 (782 aa).

Disordered regions lie at residues 1-30 (MSGVQSKAARLQKERKEKLSADRERKTATS), 90-200 (QEGD…GGAG), and 338-397 (NKGT…SAEE). 2 stretches are compositionally biased toward basic and acidic residues: residues 11–27 (LQKERKEKLSADRERKT) and 95–107 (ISERPKPGEKVEE). S136 carries the post-translational modification Phosphoserine. Basic and acidic residues-rich tracts occupy residues 143–158 (SLERGGEALRGEHGRC) and 183–194 (EENRLKAPKESP). A compositionally biased stretch (acidic residues) spans 347–396 (GEEEEISETQGEETSEGETSELGEEEGSESEEEEESSESEEEEESSESAE). Residues S407, S409, S442, S478, S490, S559, and S567 each carry the phosphoserine modification.

It belongs to the transposase 22 family.

The sequence is that of LINE-1 type transposase domain-containing protein 1 (L1td1) from Mus musculus (Mouse).